A 194-amino-acid polypeptide reads, in one-letter code: Outer-membrane lipoprotein LolB (194 aa).

The first 18 residues, 1-18 (MTLLLRLFTLGCLLLLAG), serve as a signal peptide directing secretion. Cys-19 carries the N-palmitoyl cysteine lipid modification. The S-diacylglycerol cysteine moiety is linked to residue Cys-19.

Belongs to the LolB family. As to quaternary structure, monomer.

It is found in the cell outer membrane. Its function is as follows. Plays a critical role in the incorporation of lipoproteins in the outer membrane after they are released by the LolA protein. The protein is Outer-membrane lipoprotein LolB of Aeromonas hydrophila subsp. hydrophila (strain ATCC 7966 / DSM 30187 / BCRC 13018 / CCUG 14551 / JCM 1027 / KCTC 2358 / NCIMB 9240 / NCTC 8049).